The chain runs to 198 residues: Putative peptidyl-prolyl cis-trans isomerase (198 aa).

Residues 14–195 form the PPIase cyclophilin-type domain; that stretch reads NEIKVAMHTN…HDVVIESIDV (182 aa).

Belongs to the cyclophilin-type PPIase family.

It catalyses the reaction [protein]-peptidylproline (omega=180) = [protein]-peptidylproline (omega=0). In terms of biological role, PPIases accelerate the folding of proteins. It catalyzes the cis-trans isomerization of proline imidic peptide bonds in oligopeptides. The protein is Putative peptidyl-prolyl cis-trans isomerase of Staphylococcus haemolyticus (strain JCSC1435).